A 459-amino-acid polypeptide reads, in one-letter code: Putrescine aminotransferase (459 aa).

Residues 150-151 (GT) and glutamine 274 each bind pyridoxal 5'-phosphate. N6-(pyridoxal phosphate)lysine is present on lysine 300. Threonine 332 is a binding site for pyridoxal 5'-phosphate.

This sequence belongs to the class-III pyridoxal-phosphate-dependent aminotransferase family. Putrescine aminotransferase subfamily. It depends on pyridoxal 5'-phosphate as a cofactor.

The catalysed reaction is an alkane-alpha,omega-diamine + 2-oxoglutarate = an omega-aminoaldehyde + L-glutamate. It carries out the reaction putrescine + 2-oxoglutarate = 1-pyrroline + L-glutamate + H2O. The enzyme catalyses cadaverine + 2-oxoglutarate = 5-aminopentanal + L-glutamate. It functions in the pathway amine and polyamine degradation; putrescine degradation; 4-aminobutanal from putrescine (transaminase route): step 1/1. Functionally, catalyzes the aminotransferase reaction from putrescine to 2-oxoglutarate, leading to glutamate and 4-aminobutanal, which spontaneously cyclizes to form 1-pyrroline. This is the first step in one of two pathways for putrescine degradation, where putrescine is converted into 4-aminobutanoate (gamma-aminobutyrate or GABA) via 4-aminobutanal. Also functions as a cadaverine transaminase in a a L-lysine degradation pathway to succinate that proceeds via cadaverine, glutarate and L-2-hydroxyglutarate. This is Putrescine aminotransferase from Escherichia coli O9:H4 (strain HS).